A 227-amino-acid polypeptide reads, in one-letter code: Cytochrome c oxidase subunit 2 (227 aa).

The Mitochondrial intermembrane segment spans residues 1–14 (MAYPFQLGLQDATS). The helical transmembrane segment at 15-45 (PIMEELTNFHDHTLMIVFLISSLVLYIISLM) threads the bilayer. Over 46–59 (LTTKLTHTSTMDAQ) the chain is Mitochondrial matrix. A helical membrane pass occupies residues 60-87 (EVETIWTILPAAILVLIALPSLRILYMM). Residues 88–227 (DEINNPVLTV…YFESWSASMI (140 aa)) lie on the Mitochondrial intermembrane side of the membrane. Histidine 161, cysteine 196, glutamate 198, cysteine 200, histidine 204, and methionine 207 together coordinate Cu cation. Position 198 (glutamate 198) interacts with Mg(2+). Position 218 is a phosphotyrosine (tyrosine 218).

This sequence belongs to the cytochrome c oxidase subunit 2 family. Component of the cytochrome c oxidase (complex IV, CIV), a multisubunit enzyme composed of 14 subunits. The complex is composed of a catalytic core of 3 subunits MT-CO1, MT-CO2 and MT-CO3, encoded in the mitochondrial DNA, and 11 supernumerary subunits COX4I, COX5A, COX5B, COX6A, COX6B, COX6C, COX7A, COX7B, COX7C, COX8 and NDUFA4, which are encoded in the nuclear genome. The complex exists as a monomer or a dimer and forms supercomplexes (SCs) in the inner mitochondrial membrane with NADH-ubiquinone oxidoreductase (complex I, CI) and ubiquinol-cytochrome c oxidoreductase (cytochrome b-c1 complex, complex III, CIII), resulting in different assemblies (supercomplex SCI(1)III(2)IV(1) and megacomplex MCI(2)III(2)IV(2)). Found in a complex with TMEM177, COA6, COX18, COX20, SCO1 and SCO2. Interacts with TMEM177 in a COX20-dependent manner. Interacts with COX20. Interacts with COX16. Cu cation is required as a cofactor.

It localises to the mitochondrion inner membrane. The enzyme catalyses 4 Fe(II)-[cytochrome c] + O2 + 8 H(+)(in) = 4 Fe(III)-[cytochrome c] + 2 H2O + 4 H(+)(out). Functionally, component of the cytochrome c oxidase, the last enzyme in the mitochondrial electron transport chain which drives oxidative phosphorylation. The respiratory chain contains 3 multisubunit complexes succinate dehydrogenase (complex II, CII), ubiquinol-cytochrome c oxidoreductase (cytochrome b-c1 complex, complex III, CIII) and cytochrome c oxidase (complex IV, CIV), that cooperate to transfer electrons derived from NADH and succinate to molecular oxygen, creating an electrochemical gradient over the inner membrane that drives transmembrane transport and the ATP synthase. Cytochrome c oxidase is the component of the respiratory chain that catalyzes the reduction of oxygen to water. Electrons originating from reduced cytochrome c in the intermembrane space (IMS) are transferred via the dinuclear copper A center (CU(A)) of subunit 2 and heme A of subunit 1 to the active site in subunit 1, a binuclear center (BNC) formed by heme A3 and copper B (CU(B)). The BNC reduces molecular oxygen to 2 water molecules using 4 electrons from cytochrome c in the IMS and 4 protons from the mitochondrial matrix. The sequence is that of Cytochrome c oxidase subunit 2 (MT-CO2) from Conilurus penicillatus (Brush-tailed rabbit-rat).